Consider the following 256-residue polypeptide: Hemin import ATP-binding protein HmuV (256 aa).

The region spanning Ile2 to Asp238 is the ABC transporter domain. Residue Gly34–Ser41 coordinates ATP.

This sequence belongs to the ABC transporter superfamily. Heme (hemin) importer (TC 3.A.1.14.5) family. The complex is composed of two ATP-binding proteins (HmuV), two transmembrane proteins (HmuU) and a solute-binding protein (HmuT).

Its subcellular location is the cell inner membrane. In terms of biological role, part of the ABC transporter complex HmuTUV involved in hemin import. Responsible for energy coupling to the transport system. The chain is Hemin import ATP-binding protein HmuV from Escherichia coli O157:H7.